We begin with the raw amino-acid sequence, 592 residues long: Delta-like protein 3 (592 aa).

Positions 1–32 (MVSLQVSPLSQTLILAFLLPQALPAGVFELQI) are cleaved as a signal peptide. Residues 33–490 (HSFGPGPGLG…LRQADPQRFL (458 aa)) are Extracellular-facing. One can recognise a DSL domain in the interval 174–213 (ARCEPPAVGAACARLCRSRSAPSRCGPGLRPCTPFPDECE). EGF-like domains follow at residues 214–247 (APSVCRPGCSPEHGYCEEPDECRCLEGWTGPLCT), 272–308 (GPGPCDGNPCANGGSCSETSGSFECACPRGFYGLRCE), 310–349 (SGVTCADGPCFNGGLCVGGEDPDSAYVCHCPPGFQGSNCE), 351–387 (RVDRCSLQPCQNGGLCLDLGHALRCRCRAGFAGPRCE), 389–425 (DLDDCAGRACANGGTCVEGGGSRRCSCALGFGGRDCR), and 427–463 (RADPCASRPCAHGGRCYAHFSGLVCACAPGYMGVRCE). Intrachain disulfides connect cysteine 218/cysteine 229, cysteine 222/cysteine 235, cysteine 237/cysteine 246, cysteine 276/cysteine 287, cysteine 281/cysteine 296, cysteine 298/cysteine 307, cysteine 314/cysteine 325, cysteine 319/cysteine 337, cysteine 339/cysteine 348, cysteine 355/cysteine 366, cysteine 360/cysteine 375, cysteine 377/cysteine 386, cysteine 393/cysteine 404, cysteine 398/cysteine 413, cysteine 415/cysteine 424, cysteine 431/cysteine 442, cysteine 436/cysteine 451, and cysteine 453/cysteine 462. Residues 491–511 (LPPALGLLVAAGLAGAALLVI) traverse the membrane as a helical segment. At 512–592 (HVRRRGPGQD…REDWLIQVLF (81 aa)) the chain is on the cytoplasmic side. The interval 548-567 (QDGAGDGPSSSADWNHPEDG) is disordered.

As to quaternary structure, can bind and activate Notch-1 or another Notch receptor. Post-translationally, ubiquitinated by MIB (MIB1 or MIB2), leading to its endocytosis and subsequent degradation. As to expression, predominantly expressed in the neuroectoderm and paraxial mesoderm during embryogenesis.

It localises to the membrane. Functionally, inhibits primary neurogenesis. May be required to divert neurons along a specific differentiation pathway. Plays a role in the formation of somite boundaries during segmentation of the paraxial mesoderm. The chain is Delta-like protein 3 (Dll3) from Mus musculus (Mouse).